The following is a 375-amino-acid chain: Enoyl-[acyl-carrier-protein] reductase, mitochondrial (375 aa).

A mitochondrion-targeting transit peptide spans 1 to 37 (MAALMESVVGRALKFSSTANFRSIRRGETPTLCIKSF). Residue tyrosine 96 is the Proton donor of the active site. NADP(+)-binding positions include asparagine 169, 195-198 (TSIV), 218-220 (RDR), 287-290 (YGGM), 312-314 (FWL), and lysine 370.

It belongs to the zinc-containing alcohol dehydrogenase family. Quinone oxidoreductase subfamily. As to quaternary structure, homodimer.

It localises to the mitochondrion. It carries out the reaction a 2,3-saturated acyl-[ACP] + NADP(+) = a (2E)-enoyl-[ACP] + NADPH + H(+). Its function is as follows. Catalyzes the NADPH-dependent reduction of trans-2-enoyl thioesters in mitochondrial fatty acid synthesis (fatty acid synthesis type II). Fatty acid chain elongation in mitochondria uses acyl carrier protein (ACP) as an acyl group carrier, but the enzyme accepts both ACP and CoA thioesters as substrates in vitro. This Arabidopsis thaliana (Mouse-ear cress) protein is Enoyl-[acyl-carrier-protein] reductase, mitochondrial.